A 215-amino-acid chain; its full sequence is Elongation factor Ts (215 aa).

The involved in Mg(2+) ion dislocation from EF-Tu stretch occupies residues 80–83 (TDFA).

This sequence belongs to the EF-Ts family.

The protein resides in the cytoplasm. Its function is as follows. Associates with the EF-Tu.GDP complex and induces the exchange of GDP to GTP. It remains bound to the aminoacyl-tRNA.EF-Tu.GTP complex up to the GTP hydrolysis stage on the ribosome. In Acetivibrio thermocellus (strain ATCC 27405 / DSM 1237 / JCM 9322 / NBRC 103400 / NCIMB 10682 / NRRL B-4536 / VPI 7372) (Clostridium thermocellum), this protein is Elongation factor Ts.